A 572-amino-acid chain; its full sequence is Vacuolar protein sorting-associated protein vps901 (572 aa).

Basic and acidic residues-rich tracts occupy residues 1–31 (MDYPSFHEDPTKDESTVAEQRKGQSNEEKPL) and 39–53 (DEQRNAYNEHCKNHD). The interval 1-108 (MDYPSFHEDP…HENNPGQQEI (108 aa)) is disordered. A compositionally biased stretch (polar residues) spans 69–80 (QYEQTDSSSDQE). Positions 82-98 (MNEKQSLDKENRNDNIP) are enriched in basic and acidic residues. The VPS9 domain occupies 219–357 (VEEDRVLSEK…IETLDCSSLT (139 aa)). The segment at 430 to 502 (QIDTPESKEY…IVHEEQPVDD (73 aa)) is disordered. Polar residues predominate over residues 445–457 (PRGSSHSGSFTTD). The region spanning 529–571 (REKAEAITALRAMFPAFDSEVIEVVLNAQQGRLSSSIDSLLEM) is the CUE domain.

Functionally, required for vacuolar protein sorting; may be required for the consumption of transport vesicles containing vacuolar protein precursors. Required for vacuolar fusion. This is Vacuolar protein sorting-associated protein vps901 (vps901) from Schizosaccharomyces pombe (strain 972 / ATCC 24843) (Fission yeast).